The primary structure comprises 370 residues: 3-dehydroquinate synthase (370 aa).

NAD(+) is bound by residues glycine 112 to aspartate 116, threonine 136 to serine 137, lysine 149, lysine 158, and threonine 176 to threonine 179. Zn(2+) contacts are provided by glutamate 191, histidine 254, and histidine 276.

The protein belongs to the sugar phosphate cyclases superfamily. Dehydroquinate synthase family. Co(2+) serves as cofactor. It depends on Zn(2+) as a cofactor. Requires NAD(+) as cofactor.

Its subcellular location is the cytoplasm. It carries out the reaction 7-phospho-2-dehydro-3-deoxy-D-arabino-heptonate = 3-dehydroquinate + phosphate. It participates in metabolic intermediate biosynthesis; chorismate biosynthesis; chorismate from D-erythrose 4-phosphate and phosphoenolpyruvate: step 2/7. In terms of biological role, catalyzes the conversion of 3-deoxy-D-arabino-heptulosonate 7-phosphate (DAHP) to dehydroquinate (DHQ). This Xanthomonas oryzae pv. oryzae (strain MAFF 311018) protein is 3-dehydroquinate synthase.